Consider the following 552-residue polypeptide: FERRY endosomal RAB5 effector complex subunit 3 (552 aa).

A Phosphoserine modification is found at Ser-79.

As to quaternary structure, component of the FERRY complex composed of five subunits, TBCK, PPP1R21, FERRY3, CRYZL1 and GATD1 with a ratio of 1:2:1:2:4, respectively.

The protein localises to the cytoplasm. It is found in the early endosome. Functionally, component of the FERRY complex (Five-subunit Endosomal Rab5 and RNA/ribosome intermediary). The FERRY complex directly interacts with mRNAs and RAB5A, and functions as a RAB5A effector involved in the localization and the distribution of specific mRNAs most likely by mediating their endosomal transport. The complex recruits mRNAs and ribosomes to early endosomes through direct mRNA-interaction. Plays a role in mast cell degranulation. This is FERRY endosomal RAB5 effector complex subunit 3 from Rattus norvegicus (Rat).